Here is a 361-residue protein sequence, read N- to C-terminus: Ribosomal RNA large subunit methyltransferase M (361 aa).

S-adenosyl-L-methionine is bound by residues serine 186, 219-222 (CPGG), aspartate 238, aspartate 258, and aspartate 275. Lysine 304 acts as the Proton acceptor in catalysis.

Belongs to the class I-like SAM-binding methyltransferase superfamily. RNA methyltransferase RlmE family. RlmM subfamily. As to quaternary structure, monomer.

The protein localises to the cytoplasm. It catalyses the reaction cytidine(2498) in 23S rRNA + S-adenosyl-L-methionine = 2'-O-methylcytidine(2498) in 23S rRNA + S-adenosyl-L-homocysteine + H(+). Functionally, catalyzes the 2'-O-methylation at nucleotide C2498 in 23S rRNA. In Pseudoalteromonas translucida (strain TAC 125), this protein is Ribosomal RNA large subunit methyltransferase M.